Here is a 265-residue protein sequence, read N- to C-terminus: Hydroxyethylthiazole kinase (265 aa).

Met43 lines the substrate pocket. The ATP site is built by Lys118 and Thr165. Gly192 serves as a coordination point for substrate.

The protein belongs to the Thz kinase family. Mg(2+) is required as a cofactor.

It catalyses the reaction 5-(2-hydroxyethyl)-4-methylthiazole + ATP = 4-methyl-5-(2-phosphooxyethyl)-thiazole + ADP + H(+). Its pathway is cofactor biosynthesis; thiamine diphosphate biosynthesis; 4-methyl-5-(2-phosphoethyl)-thiazole from 5-(2-hydroxyethyl)-4-methylthiazole: step 1/1. Functionally, catalyzes the phosphorylation of the hydroxyl group of 4-methyl-5-beta-hydroxyethylthiazole (THZ). In Pyrococcus horikoshii (strain ATCC 700860 / DSM 12428 / JCM 9974 / NBRC 100139 / OT-3), this protein is Hydroxyethylthiazole kinase.